A 235-amino-acid chain; its full sequence is BPI fold-containing family A member 2 (235 aa).

The signal sequence occupies residues 1–20 (MFQLGSLVVLCGLLIGNSES). A disulfide bridge connects residues Cys-161 and Cys-204.

It belongs to the BPI/LBP/Plunc superfamily. Plunc family. Predominates in the parotid glands, present in smaller amounts (1/10) in the submaxillary glands and in the sublingual glands, and at lower amount in the pancreas but undetectable in the liver. Found also in lacrimal gland.

It localises to the secreted. Has strong antibacterial activity against P.aeruginosa. This is BPI fold-containing family A member 2 (Bpifa2) from Mus musculus (Mouse).